The chain runs to 113 residues: Protein FMC1 homolog (113 aa).

The disordered stretch occupies residues 94 to 113 (SAGLVGLKLPHQPGGKGWEP).

Belongs to the FMC1 family. Interacts with ATPAF2.

It is found in the mitochondrion. Plays a role in the assembly/stability of the mitochondrial membrane ATP synthase (F(1)F(0) ATP synthase or Complex V). In Homo sapiens (Human), this protein is Protein FMC1 homolog.